The chain runs to 284 residues: Gap junction beta-1 protein (284 aa).

Residues 1–22 (MNWTGLYTLLSGVNRHSTAIGR) are Cytoplasmic-facing. Residues 23–45 (VWLSVIFIFRIMVLVVAAESVWG) traverse the membrane as a helical segment. Residues 46 to 75 (DEKSSFICNTLQPGCNSVCYDHFFPISHVR) are Extracellular-facing. Residues 76-95 (LWSLQLILVSTPALLVAMHV) form a helical membrane-spanning segment. The Cytoplasmic portion of the chain corresponds to 96–130 (AHQQHIEKKMLRLEGHGDPLHLEEVKRHKVHISGT). Residues 131 to 153 (LWWTYVISVVFRLLFEAAFMYVF) traverse the membrane as a helical segment. At 154 to 191 (YLLYPGYAMVRLVKCDAYPCPNTVDCFVSRPTEKTIFT) the chain is on the extracellular side. A helical transmembrane segment spans residues 192 to 214 (VFMLAASGICIILNVAEVVYLIF). Residues 215–284 (RACARRAQRR…AEKSDRCSAC (70 aa)) are Cytoplasmic-facing. S233, S259, S267, and S278 each carry phosphoserine.

Belongs to the connexin family. Beta-type (group I) subfamily. In terms of assembly, a connexon is composed of a hexamer of connexins. Interacts with CNST.

Its subcellular location is the cell membrane. The protein resides in the cell junction. The protein localises to the gap junction. In terms of biological role, one gap junction consists of a cluster of closely packed pairs of transmembrane channels, the connexons, through which materials of low MW diffuse from one cell to a neighboring cell. This Bos taurus (Bovine) protein is Gap junction beta-1 protein (GJB1).